Consider the following 861-residue polypeptide: Integrator complex subunit 6-like (861 aa).

The region spanning 3-227 (ILLFLIDTSA…QCLESLVQKV (225 aa)) is the VWFA domain. A disordered region spans residues 605–626 (PQNKVKRPGEPNSPMSSKRRRS). The residue at position 617 (S617) is a Phosphoserine.

This is Integrator complex subunit 6-like (INTS6L) from Homo sapiens (Human).